An 85-amino-acid chain; its full sequence is uncharacterized protein (85 aa).

The interval 35-85 (SDKDAPFSTQALTRSKSKRKRSALPVANGLKKPTRSIKRPSRGERLSATTI) is disordered.

This is an uncharacterized protein from Pasteurella multocida (strain Pm70).